Consider the following 656-residue polypeptide: Chaperone protein DnaK (656 aa).

Disordered stretches follow at residues 488 to 532 (EMQE…DAVD) and 579 to 656 (YQQQ…DEDE). Residues 492-513 (EAEKHAEEDEKRRERIEARNEA) are compositionally biased toward basic and acidic residues. A compositionally biased stretch (acidic residues) spans 523 to 532 (LLDENEDAVD). Gly residues predominate over residues 584 to 635 (GEGGAGAGAGAAGGMGGAGPGGMGGAGPGGMGGAGPGGMGGAGPGAGAGQQG). Residues 636–656 (DGEEFVDADFEDVDDEDDEDE) are compositionally biased toward acidic residues.

The protein belongs to the heat shock protein 70 family.

Functionally, acts as a chaperone. The chain is Chaperone protein DnaK from Natronomonas pharaonis (strain ATCC 35678 / DSM 2160 / CIP 103997 / JCM 8858 / NBRC 14720 / NCIMB 2260 / Gabara) (Halobacterium pharaonis).